The following is a 158-amino-acid chain: Transcriptional repressor NrdR (158 aa).

A zinc finger lies at 3-34; it reads CPYCGFEESKVVDSRSTEDHKAIRRRRECLKC. One can recognise an ATP-cone domain in the interval 49–139; the sequence is VLVIKRDSNR…VYRQFKDINT (91 aa).

The protein belongs to the NrdR family. Zn(2+) serves as cofactor.

In terms of biological role, negatively regulates transcription of bacterial ribonucleotide reductase nrd genes and operons by binding to NrdR-boxes. This chain is Transcriptional repressor NrdR, found in Clostridium novyi (strain NT).